The primary structure comprises 505 residues: Sodium-coupled neutral amino acid transporter 3 (505 aa).

Residues 27–48 are disordered; that stretch reads VPTTDTQRTEDTQHCGEGKGFL. Residues 33–43 show a composition bias toward basic and acidic residues; the sequence is QRTEDTQHCGE. N73 is a glycosylation site (N-linked (GlcNAc...) asparagine). A run of 5 helical transmembrane segments spans residues 82 to 102, 105 to 125, 143 to 163, 186 to 206, and 212 to 232; these read GILGLAYAMANTGIILFLFLL, VALLSSYSIHLLLKSSGIVGI, AAALAITLQNIGAMSSYLYII, MDGNYLVILVSVTIILPLALM, and LGYSSGFSLSCMVFFLIAVIY. The cysteines at positions 239 and 276 are disulfide-linked. Residues N247 and N251 are each glycosylated (N-linked (GlcNAc...) asparagine). The helical transmembrane segment at 288-308 threads the bilayer; it reads AYTIPIMAFAFVCHPEVLPIY. N324 is a glycosylation site (N-linked (GlcNAc...) asparagine). Transmembrane regions (helical) follow at residues 325-345, 367-387, 409-429, 432-452, and 472-492; these read LSIAVMYVMYFLAALFGYLTF, ILCVRVAVLIAVTLTVPIVLF, VLIATGLLTCINLLVIFAPNI, IFGIIGATSAPCLIFIFPAIF, and ALCFAAVGFLLMTMSLSFIII.

It belongs to the amino acid/polyamine transporter 2 family. Expressed predominantly in liver, moderately expressed in kidney and brain, and barely detectable in heart and muscle. Within liver, expressed in hepatocytes. Not detected in testis. Expressed in cells of the ganglion cell layer, in soma of some cells of the inner nuclear layer (at protein level). Expressed in the inner segments of photoreceptor cells.

It localises to the cell membrane. It is found in the basolateral cell membrane. It catalyses the reaction L-histidine(out) + Na(+)(out) + H(+)(in) = L-histidine(in) + Na(+)(in) + H(+)(out). The catalysed reaction is L-glutamine(out) + Na(+)(out) + H(+)(in) = L-glutamine(in) + Na(+)(in) + H(+)(out). It carries out the reaction L-asparagine(out) + Na(+)(out) + H(+)(in) = L-asparagine(in) + Na(+)(in) + H(+)(out). Its function is as follows. Symporter that cotransports specific neutral amino acids and sodium ions, coupled to an H(+) antiporter activity. Mainly participates in the glutamate-GABA-glutamine cycle in brain where it transports L-glutamine from astrocytes in the intercellular space for the replenishment of both neurotransmitters glutamate and gamma-aminobutyric acid (GABA) in neurons and also functions as the major influx transporter in ganglion cells mediating the uptake of glutamine. The transport activity is specific for L-glutamine, L-histidine and L-asparagine. The transport is electroneutral coupled to the cotransport of 1 Na(+) and the antiport of 1 H(+). The transport is pH dependent, saturable, Li(+) tolerant and functions in both direction depending on the concentration gradients of its substrates and cotransported ions. Also mediates an amino acid-gated H(+) conductance that is not stoichiometrically coupled to the amino acid transport but which influences the ionic gradients that drive the amino acid transport. In addition, may play a role in nitrogen metabolism, amino acid homeostasis, glucose metabolism and renal ammoniagenesis. This Mus musculus (Mouse) protein is Sodium-coupled neutral amino acid transporter 3.